Consider the following 207-residue polypeptide: Small ribosomal subunit protein uS4c (207 aa).

An S4 RNA-binding domain is found at 92–153; it reads MRLDNILFRL…PKIYQSIITK (62 aa).

This sequence belongs to the universal ribosomal protein uS4 family. As to quaternary structure, part of the 30S ribosomal subunit. Contacts protein S5. The interaction surface between S4 and S5 is involved in control of translational fidelity.

It is found in the plastid. Its subcellular location is the chloroplast. Its function is as follows. One of the primary rRNA binding proteins, it binds directly to 16S rRNA where it nucleates assembly of the body of the 30S subunit. In terms of biological role, with S5 and S12 plays an important role in translational accuracy. This chain is Small ribosomal subunit protein uS4c (rps4), found in Equisetum bogotense (Horsetail).